The following is a 154-amino-acid chain: Nitrogen regulatory protein (154 aa).

The PTS EIIA type-2 domain maps to 6–150 (QILTPGRSLV…EALYQIVVDV (145 aa)). Residue His-68 is the Tele-phosphohistidine intermediate of the active site.

It localises to the cytoplasm. Seems to have a role in regulating nitrogen assimilation. The polypeptide is Nitrogen regulatory protein (ptsN) (Pseudomonas aeruginosa (strain ATCC 15692 / DSM 22644 / CIP 104116 / JCM 14847 / LMG 12228 / 1C / PRS 101 / PAO1)).